The chain runs to 883 residues: Glutamate receptor 2 (883 aa).

The N-terminal stretch at 1 to 24 is a signal peptide; sequence MQKIMHISVLLSPVLWGLIFGVSS. Residues 25-543 lie on the Extracellular side of the membrane; sequence NSIQIGGLFP…GVFSFLDPLA (519 aa). The cysteines at positions 78 and 330 are disulfide-linked. N-linked (GlcNAc...) asparagine glycans are attached at residues Asn256, Asn370, Asn406, and Asn413. 3 residues coordinate L-glutamate: Pro499, Thr501, and Arg506. A helical transmembrane segment spans residues 544 to 564; sequence YEIWMCIVFAYIGVSVVLFLV. Residues 565 to 591 are Cytoplasmic-facing; sequence SRFSPYEWHTEEFEDGRETQSSESTNE. Positions 592 to 607 form an intramembrane region, helical; Pore-forming; it reads FGIFNSLWFSLGAFMQ. An intramembrane segment occupies 608–610; it reads QGC. Cys610 is lipidated: S-palmitoyl cysteine. The Cytoplasmic portion of the chain corresponds to 611 to 616; that stretch reads DISPRS. A helical membrane pass occupies residues 617–637; the sequence is LSGRIVGGVWWFFTLIIISSY. Residues 638–812 are Extracellular-facing; it reads TANLAAFLTV…EKTSALSLSN (175 aa). The L-glutamate site is built by Ser675 and Thr676. Ser683 carries the post-translational modification Phosphoserine; by PKC. Ser717 carries the phosphoserine; by PKG modification. Residue Glu726 coordinates L-glutamate. Residues Cys739 and Cys794 are joined by a disulfide bond. The chain crosses the membrane as a helical span at residues 813 to 833; it reads VAGVFYILVGGLGLAMLVALI. Residues 834 to 883 are Cytoplasmic-facing; it reads EFCYKSRAEAKRMKVAKNAQNINPSSSQNSQNFATYKEGYNVYGIESVKI. Cys836 carries S-palmitoyl cysteine lipidation. Phosphoserine is present on residues Ser860 and Ser863. The required for interaction with IQSEC1 stretch occupies residues 867-877; it reads ATYKEGYNVYG. Tyr876 carries the post-translational modification Phosphotyrosine. The residue at position 880 (Ser880) is a Phosphoserine.

Belongs to the glutamate-gated ion channel (TC 1.A.10.1) family. GRIA2 subfamily. In terms of assembly, homotetramer or heterotetramer of pore-forming glutamate receptor subunits. Tetramers may be formed by the dimerization of dimers. May interact with MPP4. Forms a ternary complex with GRIP1 and CSPG4. Interacts with ATAD1 in an ATP-dependent manner. ATAD1-catalyzed ATP hydrolysis disrupts binding to ATAD1 and to GRIP1 and leads to AMPAR complex disassembly. Interacts with GRIP1 and GRIP2. Interacts with NSF via its C-terminus. Isoform 1, but not isoform 3, interacts with PICK1. Interacts with CACNG2. Interacts with GRIA1 and SYNDIG1. Part of a complex containing GRIA2, NSF and NAPA and/or NAPB. Interacts with SNX27 (via PDZ domain); the interaction is required for recycling to the plasma membrane when endocytosed and prevent degradation in lysosomes. Interacts with LRFN1. Found in a complex with GRIA1, GRIA3, GRIA4, CNIH2, CNIH3, CACNG2, CACNG3, CACNG4, CACNG5, CACNG7 and CACNG8. Interacts with CACNG5. Interacts with OLFM2. Interacts with AP4B1, AP4E1 and AP4M1; probably indirect it mediates the somatodendritic localization of GRIA2 in neurons. Forms a complex with GRIP1, NSG1 and STX12; controls the intracellular fate of AMPAR and the endosomal sorting of the GRIA2 subunit toward recycling and membrane targeting. Interacts with IQSEC1; the interaction is required for ARF6 activation. Interacts (heterotetramer form) with CNIH2 and CNIH3; this interaction promotes expression at the plasma membrane and extensively modulates their gating properties by slowing deactivation and desensitization kinetics. In terms of processing, palmitoylated. Depalmitoylated upon L-glutamate stimulation. ZDHHC3/GODZ specifically palmitoylates Cys-610, which leads to Golgi retention and decreased cell surface expression. In contrast, Cys-836 palmitoylation does not affect cell surface expression but regulates stimulation-dependent endocytosis. N-glycosylated. Post-translationally, ubiquitinated by RNF167, leading to its degradation. In terms of processing, phosphorylation at Tyr-876 is required for interaction with IQSEC1 and ARF6 activation, which in turn triggers AMPAR internalization for persistent synaptic depression. In terms of tissue distribution, detected in brain cortex, hippocampus and cerebellum (at protein level). Detected in hippocampus.

It is found in the cell membrane. The protein localises to the postsynaptic cell membrane. Its subcellular location is the postsynaptic density membrane. The enzyme catalyses Ca(2+)(in) = Ca(2+)(out). The catalysed reaction is Na(+)(in) = Na(+)(out). Its function is as follows. Ionotropic glutamate receptor that functions as a ligand-gated cation channel, gated by L-glutamate and glutamatergic agonists such as alpha-amino-3-hydroxy-5-methyl-4-isoxazolepropionic acid (AMPA), quisqualic acid, and kainic acid. L-glutamate acts as an excitatory neurotransmitter at many synapses in the central nervous system and plays an important role in fast excitatory synaptic transmission. Binding of the excitatory neurotransmitter L-glutamate induces a conformation change, leading to the opening of the cation channel, and thereby converts the chemical signal to an electrical impulse upon entry of monovalent and divalent cations such as sodium and calcium. The receptor then desensitizes rapidly and enters in a transient inactive state, characterized by the presence of bound agonist. In the presence of CACNG4 or CACNG7 or CACNG8, shows resensitization which is characterized by a delayed accumulation of current flux upon continued application of L-glutamate. Through complex formation with NSG1, GRIP1 and STX12 controls the intracellular fate of AMPAR and the endosomal sorting of the GRIA2 subunit toward recycling and membrane targeting. In Mus musculus (Mouse), this protein is Glutamate receptor 2.